A 55-amino-acid chain; its full sequence is ATP synthase F(0) complex subunit 8 (55 aa).

Residues 10 to 32 traverse the membrane as a helical segment; sequence FFTMLTTWLTFLLLIQPKLLSFI.

The protein belongs to the ATPase protein 8 family. In terms of assembly, component of the ATP synthase complex composed at least of ATP5F1A/subunit alpha, ATP5F1B/subunit beta, ATP5MC1/subunit c (homooctomer), MT-ATP6/subunit a, MT-ATP8/subunit 8, ATP5ME/subunit e, ATP5MF/subunit f, ATP5MG/subunit g, ATP5MK/subunit k, ATP5MJ/subunit j, ATP5F1C/subunit gamma, ATP5F1D/subunit delta, ATP5F1E/subunit epsilon, ATP5PF/subunit F6, ATP5PB/subunit b, ATP5PD/subunit d, ATP5PO/subunit OSCP. ATP synthase complex consists of a soluble F(1) head domain (subunits alpha(3) and beta(3)) - the catalytic core - and a membrane F(0) domain - the membrane proton channel (subunits c, a, 8, e, f, g, k and j). These two domains are linked by a central stalk (subunits gamma, delta, and epsilon) rotating inside the F1 region and a stationary peripheral stalk (subunits F6, b, d, and OSCP).

The protein resides in the mitochondrion membrane. Subunit 8, of the mitochondrial membrane ATP synthase complex (F(1)F(0) ATP synthase or Complex V) that produces ATP from ADP in the presence of a proton gradient across the membrane which is generated by electron transport complexes of the respiratory chain. ATP synthase complex consist of a soluble F(1) head domain - the catalytic core - and a membrane F(1) domain - the membrane proton channel. These two domains are linked by a central stalk rotating inside the F(1) region and a stationary peripheral stalk. During catalysis, ATP synthesis in the catalytic domain of F(1) is coupled via a rotary mechanism of the central stalk subunits to proton translocation. In vivo, can only synthesize ATP although its ATP hydrolase activity can be activated artificially in vitro. Part of the complex F(0) domain. The sequence is that of ATP synthase F(0) complex subunit 8 from Guira guira (Guira cuckoo).